The following is a 536-amino-acid chain: CBS domain-containing protein CBSCBSPB2 (536 aa).

Low complexity predominate over residues 1 to 23 (MTTTPTSSGRRSISSIRRTSSAS). The tract at residues 1–60 (MTTTPTSSGRRSISSIRRTSSASKKPVLQSEESESGSGSINENTSKPDSPLAQPVSDGER) is disordered. 4 CBS domains span residues 66-124 (RLSK…LRPE), 132-187 (MTRN…RMEK), 228-287 (VTEN…LSPE), and 295-354 (MTPN…NNSS). One can recognise a PB1 domain in the interval 406–489 (VSSFAFKFED…KVLRLHLDFT (84 aa)). A helical transmembrane segment spans residues 509–529 (VWWQTGVLAGAIVLTSIGLFV).

Its subcellular location is the membrane. This is CBS domain-containing protein CBSCBSPB2 (CBSCBSPB2) from Arabidopsis thaliana (Mouse-ear cress).